The chain runs to 139 residues: MEYNYFELLERAYQKLKDVIKQEQIRWNPPIPHIEYVKNRTIITNFKQIANYLNRDPKIIAKFFSKELFVQTIIEGNSLIINKRVSYETIKKKLDEFINIFVICPVCKRPDTELIERGRKIYYIKCHACGSESPVNYEL.

Belongs to the eIF-2-beta/eIF-5 family. In terms of assembly, heterotrimer composed of an alpha, a beta and a gamma chain.

EIF-2 functions in the early steps of protein synthesis by forming a ternary complex with GTP and initiator tRNA. This chain is Translation initiation factor 2 subunit beta, found in Nanoarchaeum equitans (strain Kin4-M).